The following is a 329-amino-acid chain: Neuropeptides B/W receptor type 1 (329 aa).

Residues 1–43 are Extracellular-facing; that stretch reads MHNLTLFESGGDNVSCGGSSLGCPNGSSLAPLPLPQPLAVAVP. 3 N-linked (GlcNAc...) asparagine glycosylation sites follow: N3, N13, and N25. The helical transmembrane segment at 44–64 threads the bilayer; the sequence is VVYGVICAVGLAGNSAVLYVL. At 65–75 the chain is on the cytoplasmic side; that stretch reads LRTPRMKTVTN. A helical transmembrane segment spans residues 76-96; sequence VFILNLAIADELFTLVLPINI. Topologically, residues 97 to 112 are extracellular; the sequence is ADFLLRRWPFGEVMCK. A disulfide bridge links C111 with C190. Residues 113 to 133 form a helical membrane-spanning segment; it reads LIVAVDQYNTFSSLYFLAVMS. At 134–158 the chain is on the cytoplasmic side; the sequence is ADRYLVVLATAESRRVSGRTYGAAR. Residues 159 to 179 form a helical membrane-spanning segment; that stretch reads AVSLAVWALVTLVVLPFAVFA. Residues 180–209 lie on the Extracellular side of the membrane; it reads RLDEEQGRRQCVLVFPQPEAFWWRASRLYT. Residues 210–230 traverse the membrane as a helical segment; it reads LVLGFAIPVTTICALYTTLLC. At 231 to 250 the chain is on the cytoplasmic side; the sequence is RLRAIQLDSHAKALDRAKKR. A helical transmembrane segment spans residues 251–271; the sequence is VTLLVAAILAVCLLCWTPYHL. Over 272-289 the chain is Extracellular; sequence STIVALTTDLPQTPLVIG. The helical transmembrane segment at 290 to 312 threads the bilayer; that stretch reads ISYFITSLSYANSCLNPFLYAFL. The Cytoplasmic portion of the chain corresponds to 313-329; the sequence is DDSFRRSLRQLVSCRSA.

It belongs to the G-protein coupled receptor 1 family.

The protein resides in the cell membrane. Functionally, interacts specifically with a number of opioid ligands. Receptor for neuropeptides B and W, which may be involved in neuroendocrine system regulation, food intake and the organization of other signals. The sequence is that of Neuropeptides B/W receptor type 1 (Npbwr1) from Mus musculus (Mouse).